Reading from the N-terminus, the 165-residue chain is MKKIAVYPGSFDPITNGHLDIIKRGLSMFDELIVLIAYNAAKSSLFTVQERIEMIQEALHDRKGVRVDSYDGLLVDYVRKEGGNVILRGLRAMSEFEYEFQLALMNRRLNRNIETVFLMTGYKWFYTSSTIIKEASRLGGSPKGLVPEVVFRKMQEKYPLMNKGK.

Ser-10 serves as a coordination point for substrate. ATP is bound by residues 10–11 (SF) and His-18. Substrate is bound by residues Lys-42, Leu-74, and Arg-88. ATP is bound by residues 89-91 (GLR), Glu-99, and 124-130 (WFYTSST).

The protein belongs to the bacterial CoaD family. Homohexamer. Requires Mg(2+) as cofactor.

The protein localises to the cytoplasm. It catalyses the reaction (R)-4'-phosphopantetheine + ATP + H(+) = 3'-dephospho-CoA + diphosphate. Its pathway is cofactor biosynthesis; coenzyme A biosynthesis; CoA from (R)-pantothenate: step 4/5. In terms of biological role, reversibly transfers an adenylyl group from ATP to 4'-phosphopantetheine, yielding dephospho-CoA (dPCoA) and pyrophosphate. The polypeptide is Phosphopantetheine adenylyltransferase (Syntrophus aciditrophicus (strain SB)).